The primary structure comprises 164 residues: Thiol peroxidase (164 aa).

Positions 18 to 164 (KKVGDSAPDF…YEAVLSHLNK (147 aa)) constitute a Thioredoxin domain. Cys60 (cysteine sulfenic acid (-SOH) intermediate) is an active-site residue. Cys60 and Cys94 are oxidised to a cystine.

Belongs to the peroxiredoxin family. Tpx subfamily. Homodimer.

It catalyses the reaction a hydroperoxide + [thioredoxin]-dithiol = an alcohol + [thioredoxin]-disulfide + H2O. Thiol-specific peroxidase that catalyzes the reduction of hydrogen peroxide and organic hydroperoxides to water and alcohols, respectively. Plays a role in cell protection against oxidative stress by detoxifying peroxides. This chain is Thiol peroxidase, found in Oceanobacillus iheyensis (strain DSM 14371 / CIP 107618 / JCM 11309 / KCTC 3954 / HTE831).